Reading from the N-terminus, the 194-residue chain is Ion-translocating oxidoreductase complex subunit B (194 aa).

The hydrophobic stretch occupies residues 1-26 (MSGVLIAVAALLALAAVFGAVLGFAS). The 59-residue stretch at 32–90 (EGDPIVDQIDSLLPQTQCGQCGHPGCRPYAEAIAEGEEHNRCPPGGQDTVVALSELLGR) folds into the 4Fe-4S domain. [4Fe-4S] cluster contacts are provided by Cys49, Cys52, Cys57, Cys73, Cys116, Cys119, Cys122, Cys126, Cys146, Cys149, Cys152, and Cys156. 2 consecutive 4Fe-4S ferredoxin-type domains span residues 107-136 (KVAY…GAAK) and 137-166 (LMHT…MLEV).

The protein belongs to the 4Fe4S bacterial-type ferredoxin family. RnfB subfamily. The complex is composed of six subunits: RnfA, RnfB, RnfC, RnfD, RnfE and RnfG. [4Fe-4S] cluster is required as a cofactor.

The protein resides in the cell inner membrane. Part of a membrane-bound complex that couples electron transfer with translocation of ions across the membrane. This chain is Ion-translocating oxidoreductase complex subunit B, found in Alcanivorax borkumensis (strain ATCC 700651 / DSM 11573 / NCIMB 13689 / SK2).